The chain runs to 206 residues: Small ribosomal subunit protein uS4 (206 aa).

One can recognise an S4 RNA-binding domain in the interval 96-158 (GRLDNVVYRM…AKQQSRIKAA (63 aa)).

The protein belongs to the universal ribosomal protein uS4 family. As to quaternary structure, part of the 30S ribosomal subunit. Contacts protein S5. The interaction surface between S4 and S5 is involved in control of translational fidelity.

Its function is as follows. One of the primary rRNA binding proteins, it binds directly to 16S rRNA where it nucleates assembly of the body of the 30S subunit. With S5 and S12 plays an important role in translational accuracy. In Vibrio atlanticus (strain LGP32) (Vibrio splendidus (strain Mel32)), this protein is Small ribosomal subunit protein uS4.